The sequence spans 166 residues: Small ribosomal subunit protein cS23z (166 aa).

This sequence belongs to the chloroplast-specific ribosomal protein cS23 family. As to quaternary structure, part of the 30S ribosomal subunit.

The protein resides in the plastid. The protein localises to the chloroplast. Its function is as follows. Component of the chloroplast ribosome (chloro-ribosome), a dedicated translation machinery responsible for the synthesis of chloroplast genome-encoded proteins, including proteins of the transcription and translation machinery and components of the photosynthetic apparatus. The sequence is that of Small ribosomal subunit protein cS23z from Arabidopsis thaliana (Mouse-ear cress).